Reading from the N-terminus, the 203-residue chain is Thymidine kinase (203 aa).

Residues 21 to 28 (GCMFAGKT) and 99 to 102 (DEIQ) contribute to the ATP site. The Proton acceptor role is filled by E100. Zn(2+) contacts are provided by C156, C159, C194, and C197.

The protein belongs to the thymidine kinase family. As to quaternary structure, homotetramer.

Its subcellular location is the cytoplasm. It catalyses the reaction thymidine + ATP = dTMP + ADP + H(+). In Mesoplasma florum (strain ATCC 33453 / NBRC 100688 / NCTC 11704 / L1) (Acholeplasma florum), this protein is Thymidine kinase.